A 921-amino-acid chain; its full sequence is MADYHFGEVENKWQSKWNAEKTFKALENSSKPKYFVLDMFPYPSGSGLHVGHPLGYIASDIMARYKRIKGYNVLHPMGFDSFGLPAEQYAVQTGQHPAITTEQNIARYIEQLNKIGFSFDWDREIRTSDPAYYKWTQWIFIQLFNHWYNKASDKAEPITNLVKQFETAGNAGINAACDEDAVTFTAADWKSYSEKQQSDTLLKYRLTYLSETMVNWCPGLGTVLANEEVKDGLSERGGFPVERKKMKQWSMRITAYADRLLKGLDTIDWPEAMKEMQRYWIGKSLGAMLTFKVVDKDMELTVFTTRIDTTFGVTYVSIAPEHEWIGALTSPEQKAAVEEYVTKAKNRSERDRMSDVKTVSGCFTGSYVTNPFNNEKIPVWIADYVLAGYGTGVVMAVPSSDERDYKFASFYKLPIISVQEGAHTDITKEDFDPKAGTMINSGFLNGLTVKQAIPEAIKFIEEKKIGFAKINFKMRDSIFGRQRYWGEPIPVSYKNDIPYVLNESELPLALPAIDEYKPTETGEPPLARNKAFADKGYELSTMPGWAGSSWYFMRYMDPQNKTAVAAADKINYWGQVDLYMGGAEHATGHLLYSRFWNKFLFDMGITPNDEPFAKLINQGMIQGVSKFAYRINGTNKFVSAGLKKEYDTTPIHVDVSIVHNDVLDTEAFKKWRPDFASAEFILENNTYVCGSEVEKMSKSKFNVVNPDDIVNKYGADTLRMYEMFLGPLEQSKPWNTNGIEGVYKFLNRFWRLFHDTAGNFAVSDAQPTAEELKVLHKTLKRVEEDIERFSFNTPVSTFMICVNELGSLKCNKRTILEPLTIALSPLAPHIAEELWSLLGHTTSVSTATYPAWDEKFLVESNHEYPISINGKMRAKLNLPVDMPAAEVEQQVLANEVVQKWLEGKAPKKIIVIPNKIVNVVM.

A 'HIGH' region motif is present at residues 41 to 52 (PYPSGSGLHVGH). The short motif at 695–699 (KMSKS) is the 'KMSKS' region element. ATP is bound at residue Lys698.

Belongs to the class-I aminoacyl-tRNA synthetase family.

The protein localises to the cytoplasm. The catalysed reaction is tRNA(Leu) + L-leucine + ATP = L-leucyl-tRNA(Leu) + AMP + diphosphate. This Cytophaga hutchinsonii (strain ATCC 33406 / DSM 1761 / CIP 103989 / NBRC 15051 / NCIMB 9469 / D465) protein is Leucine--tRNA ligase.